A 440-amino-acid chain; its full sequence is Xaa-Pro dipeptidase (440 aa).

Mn(2+) is bound by residues D244, D255, H335, E380, and E419.

The protein belongs to the peptidase M24B family. Bacterial-type prolidase subfamily. The cofactor is Mn(2+).

It catalyses the reaction Xaa-L-Pro dipeptide + H2O = an L-alpha-amino acid + L-proline. Functionally, splits dipeptides with a prolyl residue in the C-terminal position. This chain is Xaa-Pro dipeptidase, found in Shewanella baltica (strain OS185).